Reading from the N-terminus, the 182-residue chain is Small ribosomal subunit protein uS4c (182 aa).

Residues 13–32 are disordered; it reads GLTSKRPRSGSDLKNPLRSG. One can recognise an S4 RNA-binding domain in the interval 82–143; the sequence is MRLDNILFRL…KQRSKALIQN (62 aa).

Belongs to the universal ribosomal protein uS4 family. Part of the 30S ribosomal subunit. Contacts protein S5. The interaction surface between S4 and S5 is involved in control of translational fidelity.

The protein localises to the plastid. Its subcellular location is the chloroplast. In terms of biological role, one of the primary rRNA binding proteins, it binds directly to 16S rRNA where it nucleates assembly of the body of the 30S subunit. Its function is as follows. With S5 and S12 plays an important role in translational accuracy. The protein is Small ribosomal subunit protein uS4c (rps4) of Scadoxus puniceus (Paintbrush lily).